Here is a 191-residue protein sequence, read N- to C-terminus: Potassium-transporting ATPase KdpC subunit (191 aa).

The helical transmembrane segment at 13-35 (VLFTGLCGLAYPLAITGVAQAVL) threads the bilayer. The interval 112–132 (SGPVPADAVTSSASGLDPDIS) is disordered.

Belongs to the KdpC family. As to quaternary structure, the system is composed of three essential subunits: KdpA, KdpB and KdpC.

Its subcellular location is the cell inner membrane. Its function is as follows. Part of the high-affinity ATP-driven potassium transport (or Kdp) system, which catalyzes the hydrolysis of ATP coupled with the electrogenic transport of potassium into the cytoplasm. This subunit acts as a catalytic chaperone that increases the ATP-binding affinity of the ATP-hydrolyzing subunit KdpB by the formation of a transient KdpB/KdpC/ATP ternary complex. The sequence is that of Potassium-transporting ATPase KdpC subunit from Allorhizobium ampelinum (strain ATCC BAA-846 / DSM 112012 / S4) (Agrobacterium vitis (strain S4)).